The chain runs to 176 residues: R-phycoerythrin beta chain (176 aa).

Positions 50 and 61 each coordinate phycourobilin. N72 is subject to N4-methylasparagine. (2R,3E)-phycoerythrobilin is bound by residues C82 and C158.

This sequence belongs to the phycobiliprotein family. Heterodimer of an alpha and a beta chain. In terms of processing, contains two covalently linked phycoerythrobilin chromophores and one covalently linked phycourobilin chromophore.

It localises to the plastid. Its subcellular location is the chloroplast thylakoid membrane. Functionally, light-harvesting photosynthetic bile pigment-protein from the phycobiliprotein complex. This chain is R-phycoerythrin beta chain (cpeB), found in Aglaothamnion neglectum (Red alga).